The primary structure comprises 126 residues: Large-conductance mechanosensitive channel (126 aa).

3 consecutive transmembrane segments (helical) span residues 14–34 (VIDL…VTSL), 40–60 (MPLL…FTFV), and 67–87 (GLFI…FLFI).

This sequence belongs to the MscL family. As to quaternary structure, homopentamer.

It localises to the cell membrane. In terms of biological role, channel that opens in response to stretch forces in the membrane lipid bilayer. May participate in the regulation of osmotic pressure changes within the cell. In Bacillus licheniformis (strain ATCC 14580 / DSM 13 / JCM 2505 / CCUG 7422 / NBRC 12200 / NCIMB 9375 / NCTC 10341 / NRRL NRS-1264 / Gibson 46), this protein is Large-conductance mechanosensitive channel.